The primary structure comprises 391 residues: Histidinol-phosphate aminotransferase (391 aa).

Lysine 245 carries the N6-(pyridoxal phosphate)lysine modification.

This sequence belongs to the class-II pyridoxal-phosphate-dependent aminotransferase family. Histidinol-phosphate aminotransferase subfamily. Homodimer. The cofactor is pyridoxal 5'-phosphate.

The enzyme catalyses L-histidinol phosphate + 2-oxoglutarate = 3-(imidazol-4-yl)-2-oxopropyl phosphate + L-glutamate. The protein operates within amino-acid biosynthesis; L-histidine biosynthesis; L-histidine from 5-phospho-alpha-D-ribose 1-diphosphate: step 7/9. The sequence is that of Histidinol-phosphate aminotransferase from Bifidobacterium adolescentis (strain ATCC 15703 / DSM 20083 / NCTC 11814 / E194a).